The chain runs to 559 residues: Glycerol kinase (559 aa).

Thr20 provides a ligand contact to ADP. ATP-binding residues include Thr20, Ser21, and Ser22. Thr20 lines the sn-glycerol 3-phosphate pocket. Arg24 contacts ADP. Arg94, Glu95, and Tyr148 together coordinate sn-glycerol 3-phosphate. Glycerol is bound by residues Arg94, Glu95, and Tyr148. Gly252 serves as a coordination point for beta-D-fructose 1,6-bisphosphate. Sn-glycerol 3-phosphate is bound at residue Asp265. Glycerol contacts are provided by Asp265 and Gln266. ADP-binding residues include Thr287, Gly332, Gly433, and Asn437. Positions 287, 332, and 433 each coordinate ATP. Position 501 (Glu501) interacts with Zn(2+). Residues 532–552 (IFCSLPLGFFIVSSMVMLIGA) traverse the membrane as a helical segment.

It belongs to the FGGY kinase family.

Its subcellular location is the mitochondrion outer membrane. It localises to the nucleus. The protein resides in the cytoplasm. It is found in the cytosol. It carries out the reaction glycerol + ATP = sn-glycerol 3-phosphate + ADP + H(+). The protein operates within polyol metabolism; glycerol degradation via glycerol kinase pathway; sn-glycerol 3-phosphate from glycerol: step 1/1. In terms of biological role, kinase that plays a key role in glycerol metabolism, catalyzing its phosphorylation to produce sn-glycerol 3-phosphate. Sn-glycerol 3-phosphate is a crucial intermediate in various metabolic pathways, such as the synthesis of glycerolipids and triglycerides, glycogenesis, glycolysis and gluconeogenesis. The polypeptide is Glycerol kinase (Rattus norvegicus (Rat)).